The sequence spans 81 residues: CLAVATA3/ESR (CLE)-related protein 12 (81 aa).

A signal peptide spans 1–31 (MENSNKVPISKIGLIMLMIFSTFFMSPHARR). The segment covering 55–67 (KRSRTDLEDKAVP) has biased composition (basic and acidic residues). The disordered stretch occupies residues 55–81 (KRSRTDLEDKAVPGDRLSPGGPNHIHN). A hydroxyproline mark is found at Pro-73 and Pro-76. The O-linked (Ara...) hydroxyproline glycan is linked to Pro-76.

This sequence belongs to the CLV3/ESR signal peptide family. The O-glycosylation (arabinosylation) of the hydroxyproline Pro-76 enhances binding affinity of the CLE12p peptide for its receptor. As to expression, expressed in young nodules throughout the central tissue. Expressed in the apical region of elongated nodules, corresponding to the meristematic and early infection zones.

It is found in the secreted. The protein localises to the extracellular space. Functionally, signaling peptide involved in the regulation of nodulation. Moves from root to shoot to function with the receptor kinase SUNN, in a signaling pathway that plays roles during cellular differentiation, both at the onset of nodulation, and later during nodule meristem development and subsequent homeostasis. Interacts with SUNN signaling to control nodule numbers. SUNN is involved in the autoregulation of nodulation (AON), a long distance systemic signaling from root to shoot and back again, which allows legumes to limit the number of root nodules formed based on available nitrogen and previous rhizobial colonization. In Medicago truncatula (Barrel medic), this protein is CLAVATA3/ESR (CLE)-related protein 12.